A 219-amino-acid polypeptide reads, in one-letter code: UPF0619 GPI-anchored membrane protein AFUA_3G00880 (219 aa).

An N-terminal signal peptide occupies residues 1 to 16 (MRFALTLTAFVGSVAA). Residue asparagine 85 is glycosylated (N-linked (GlcNAc...) asparagine). Disordered regions lie at residues 107–144 (SQQF…GTVS) and 160–205 (SSTL…SLTV). A compositionally biased stretch (low complexity) spans 114–144 (SSGSSTTSDSTSSASATGSASTSSSSTGTVS). A lipid anchor (GPI-like-anchor amidated asparagine) is attached at asparagine 198. Positions 199–219 (GAGSLTVPAGSLLLGLVALAL) are cleaved as a propeptide — removed in mature form.

The protein belongs to the UPF0619 family. The GPI-like anchor contains a phosphoceramide lipid group. The anchor position has not been determined.

The protein localises to the cell membrane. The sequence is that of UPF0619 GPI-anchored membrane protein AFUA_3G00880 from Aspergillus fumigatus (strain ATCC MYA-4609 / CBS 101355 / FGSC A1100 / Af293) (Neosartorya fumigata).